Consider the following 299-residue polypeptide: MGAQLRVYRQKIKSAHRTKKITRAMELISASRIQKEQARVAASSPYARAITRAVSAVATYSNVGHVLTTEPEKIERAVIVIFSSDRGLAGAFNSNVLKESEKLAELLRSQGKEVVYFLIGRKAQGYFSFRRRAFERVWTGNTDAPEFEQAKEVADAILESFLRDSADGGVDEIHVIYNRFVSMLTQEPQVVRLLPMEVVEGVEEPDRTQVLPLYEFEPDVNTVLDSLLPVYIESRIFNAMLQSAASKHAATQKAMKAASDNADKLITDYTRLANNARQAEITQQISEIVGGADALSSAN.

The protein belongs to the ATPase gamma chain family. F-type ATPases have 2 components, CF(1) - the catalytic core - and CF(0) - the membrane proton channel. CF(1) has five subunits: alpha(3), beta(3), gamma(1), delta(1), epsilon(1). CF(0) has three main subunits: a, b and c.

It is found in the cell membrane. In terms of biological role, produces ATP from ADP in the presence of a proton gradient across the membrane. The gamma chain is believed to be important in regulating ATPase activity and the flow of protons through the CF(0) complex. In Leifsonia xyli subsp. xyli (strain CTCB07), this protein is ATP synthase gamma chain.